A 51-amino-acid polypeptide reads, in one-letter code: Large ribosomal subunit protein bL33 (51 aa).

The protein belongs to the bacterial ribosomal protein bL33 family.

In Idiomarina loihiensis (strain ATCC BAA-735 / DSM 15497 / L2-TR), this protein is Large ribosomal subunit protein bL33.